The chain runs to 166 residues: Probable protein tyrosine phosphatase type IVA A (166 aa).

The Tyrosine-protein phosphatase domain occupies 10–164 (NPASLVESST…YKSKKKSSCR (155 aa)). A disulfide bridge links cysteine 52 with cysteine 107. Catalysis depends on aspartate 75, which acts as the Proton donor. Cysteine 107 (phosphocysteine intermediate) is an active-site residue. 108-113 (VAGLGR) provides a ligand contact to phosphate. Arginine 113 contributes to the substrate binding site. A Cysteine methyl ester modification is found at cysteine 163. Cysteine 163 is lipidated: S-farnesyl cysteine. Residues 164-166 (RIM) constitute a propeptide, removed in mature form.

This sequence belongs to the protein-tyrosine phosphatase family.

It is found in the membrane. It carries out the reaction O-phospho-L-tyrosyl-[protein] + H2O = L-tyrosyl-[protein] + phosphate. The polypeptide is Probable protein tyrosine phosphatase type IVA A (Dictyostelium discoideum (Social amoeba)).